Here is a 394-residue protein sequence, read N- to C-terminus: Phosphoglycerate kinase (394 aa).

Substrate-binding positions include 21 to 23 (DFN), Arg37, 60 to 63 (HLGR), Arg119, and Arg152. Residues Lys202, Glu324, and 350–353 (GGDS) each bind ATP.

It belongs to the phosphoglycerate kinase family. As to quaternary structure, monomer.

The protein resides in the cytoplasm. The catalysed reaction is (2R)-3-phosphoglycerate + ATP = (2R)-3-phospho-glyceroyl phosphate + ADP. It participates in carbohydrate degradation; glycolysis; pyruvate from D-glyceraldehyde 3-phosphate: step 2/5. This chain is Phosphoglycerate kinase, found in Carboxydothermus hydrogenoformans (strain ATCC BAA-161 / DSM 6008 / Z-2901).